A 200-amino-acid polypeptide reads, in one-letter code: Transcription elongation factor A protein-like 3 (200 aa).

The interval 1-200 (MEKPYNKNEG…QRGLHDIPYL (200 aa)) is disordered. Residues 20–36 (DEVEPDDEGKSDEEEKP) show a composition bias toward acidic residues. Ser-30 is subject to Phosphoserine. Positions 37-50 (DVEGKTECEGKRED) are enriched in basic and acidic residues. Residues 51-64 (EGEPGDEGQLEDEG) show a composition bias toward acidic residues. Position 65 is a phosphoserine (Ser-65). Basic and acidic residues-rich tracts occupy residues 65 to 80 (SQEKQGRSEGEGKPQG), 96 to 107 (AAEKRPAEDYVP), and 115 to 154 (DRGTDDSPKDSQEDLQERHLSSEEMMRECGDVSRAQEELR).

It belongs to the TFS-II family. TFA subfamily.

Its subcellular location is the nucleus. Functionally, may be involved in transcriptional regulation. This is Transcription elongation factor A protein-like 3 (TCEAL3) from Homo sapiens (Human).